We begin with the raw amino-acid sequence, 228 residues long: Sec-independent protein translocase protein TatB (228 aa).

The chain crosses the membrane as a helical span at residues 1–21 (MFDFGLGELVFVGIIALIVLG). 2 disordered regions span residues 138–162 (RSYA…AETD) and 195–228 (PVPH…VRKS). Positions 206-228 (AISRKRDLRPKSRAKPKLRVRKS) are enriched in basic residues.

It belongs to the TatB family. The Tat system comprises two distinct complexes: a TatABC complex, containing multiple copies of TatA, TatB and TatC subunits, and a separate TatA complex, containing only TatA subunits. Substrates initially bind to the TatABC complex, which probably triggers association of the separate TatA complex to form the active translocon.

It is found in the cell inner membrane. Its function is as follows. Part of the twin-arginine translocation (Tat) system that transports large folded proteins containing a characteristic twin-arginine motif in their signal peptide across membranes. Together with TatC, TatB is part of a receptor directly interacting with Tat signal peptides. TatB may form an oligomeric binding site that transiently accommodates folded Tat precursor proteins before their translocation. This is Sec-independent protein translocase protein TatB from Neisseria meningitidis serogroup A / serotype 4A (strain DSM 15465 / Z2491).